Reading from the N-terminus, the 395-residue chain is MGKVRNISGCVAVAHGVRLADVDVICSYPIRPYTGIMSELARMVADGELDAEFVHGEGEHAQLSVVYGASAAGARVFTGSSGVGVTYAMEVYSPISGERLPVQMAIADRTLDPPGDFGEEHTDAECCRDQGWIQGWASTPQEALDNTLIYYRVGEDQRVLLPQYACLDGYFVSHILGPVDIPDEAQVKEFLPPYKNHHVLDPRKPQIIGPQIEPAMGPPLQYQRYQAVKGVHKVLEEACDEFARIFGRKYDPYLDEYLTDDAEVIIFGQGAHMETAKAVARRLRNLGEKVGVARLRTFRPFPTEQIKERLSKFKAIGVLDVSANFGISCSGGVLLSELRAALYDYGDKVKTVGFVAGLGGEVVTHDEFYRMFQKLKEIAKTGKVEQTSYWIPFEL.

As to quaternary structure, dimer of heterotrimer of one alpha, one beta and one delta subunit.

It carries out the reaction oxidized 2[4Fe-4S]-[ferredoxin] + oxalate = reduced 2[4Fe-4S]-[ferredoxin] + 2 CO2. In terms of biological role, catalyzes the anaerobic oxidation of oxalate using a broad range of electron acceptors, including ferredoxin and the nickel-dependent carbon monoxide dehydrogenase. Does not require coenzyme A as cosubstrate. Enables anaerobic growth on oxalate which is used as energy source by the bacteria. The sequence is that of Oxalate oxidoreductase subunit alpha from Moorella thermoacetica (strain ATCC 39073 / JCM 9320).